The following is a 111-amino-acid chain: MPKVLFLPHKILLPKSIECEAQTGETILTVALRNNIKLEHACEQSCACSTCHCIIKKGFFSLSGWSEKEDDILDKAWGLQSESRLSCQAVIGKSDIEVEIPLYNLNYTVEY.

Residues 1 to 104 (MPKVLFLPHK…DIEVEIPLYN (104 aa)) enclose the 2Fe-2S ferredoxin-type domain. [2Fe-2S] cluster-binding residues include cysteine 42, cysteine 48, cysteine 51, and cysteine 87.

Belongs to the adrenodoxin/putidaredoxin family. [2Fe-2S] cluster serves as cofactor.

Ferredoxin are iron-sulfur proteins that transfer electrons in a wide variety of metabolic reactions. In Buchnera aphidicola subsp. Acyrthosiphon pisum (strain APS) (Acyrthosiphon pisum symbiotic bacterium), this protein is 2Fe-2S ferredoxin (fdx).